The primary structure comprises 229 residues: NAD-dependent protein deacetylase (229 aa).

The Deacetylase sirtuin-type domain maps to 1 to 229; sequence MNNLKEAIKQ…NDAVKVFAEI (229 aa). NAD(+) is bound by residues alanine 20, arginine 32, glutamine 96, isoleucine 98, aspartate 99, histidine 114, threonine 181, serine 182, asparagine 205, and valine 223. The nicotinamide site is built by isoleucine 98 and aspartate 99. Histidine 114 (proton acceptor) is an active-site residue.

It belongs to the sirtuin family. Class U subfamily.

Its subcellular location is the cytoplasm. The catalysed reaction is N(6)-acetyl-L-lysyl-[protein] + NAD(+) + H2O = 2''-O-acetyl-ADP-D-ribose + nicotinamide + L-lysyl-[protein]. Its function is as follows. NAD-dependent protein deacetylase which modulates the activities of several enzymes which are inactive in their acetylated form. This Listeria innocua serovar 6a (strain ATCC BAA-680 / CLIP 11262) protein is NAD-dependent protein deacetylase.